We begin with the raw amino-acid sequence, 147 residues long: MVHFTAEEKAAVTSLWSKMNVEEAGGEALGRLLVVYPWTQRFFDSFGNLSSPSAILGNPKVKAHGKKVLTSFGDAIKNMDNLKPAFAKLSELHCDKLHVDPENFKLLGNVMVIILATHFGKEFTPEVQAAWQKLVSAVAIALAHKYH.

Residues 3–147 (HFTAEEKAAV…VAIALAHKYH (145 aa)) enclose the Globin domain. Phosphoserine occurs at positions 14 and 51. The heme b site is built by H64 and H93.

The protein belongs to the globin family. In terms of assembly, heterotetramer of two alpha chains and two epsilon chains in early embryonic hemoglobin Gower-2; two zeta chains and two epsilon chains in early embryonic hemoglobin Gower-1. Red blood cells.

In terms of biological role, the epsilon chain is a beta-type chain of early mammalian embryonic hemoglobin. This Pan troglodytes (Chimpanzee) protein is Hemoglobin subunit epsilon (HBE1).